We begin with the raw amino-acid sequence, 314 residues long: Methionyl-tRNA formyltransferase (314 aa).

Position 110–113 (110–113 (SLLP)) interacts with (6S)-5,6,7,8-tetrahydrofolate.

This sequence belongs to the Fmt family.

It carries out the reaction L-methionyl-tRNA(fMet) + (6R)-10-formyltetrahydrofolate = N-formyl-L-methionyl-tRNA(fMet) + (6S)-5,6,7,8-tetrahydrofolate + H(+). Functionally, attaches a formyl group to the free amino group of methionyl-tRNA(fMet). The formyl group appears to play a dual role in the initiator identity of N-formylmethionyl-tRNA by promoting its recognition by IF2 and preventing the misappropriation of this tRNA by the elongation apparatus. This chain is Methionyl-tRNA formyltransferase, found in Lactobacillus johnsonii (strain CNCM I-12250 / La1 / NCC 533).